The primary structure comprises 343 residues: Sorbitol dehydrogenase (343 aa).

The interval 1 to 26 is disordered; it reads MKALVKTQHGTGHFAVQEKPEPTPGK. 3 residues coordinate Zn(2+): Cys-39, His-60, and Glu-61. Residue Glu-146 coordinates substrate. NAD(+)-binding positions include Ile-174, Arg-200, and 262-264; that span reads VGL.

This sequence belongs to the zinc-containing alcohol dehydrogenase family. In terms of assembly, homotetramer. Requires Zn(2+) as cofactor.

It carries out the reaction keto-D-fructose + NADH + H(+) = D-sorbitol + NAD(+). It catalyses the reaction xylitol + NAD(+) = D-xylulose + NADH + H(+). The catalysed reaction is L-iditol + NAD(+) = keto-L-sorbose + NADH + H(+). Polyol dehydrogenase that catalyzes the NAD(+)-dependent oxidation of various sugar alcohols. Is active with D-sorbitol (D-glucitol), xylitol and L-iditol as substrates, leading to the C2-oxidized products D-fructose, D-xylulose and L-sorbose, respectively. This chain is Sorbitol dehydrogenase (gutB), found in Halalkalibacterium halodurans (strain ATCC BAA-125 / DSM 18197 / FERM 7344 / JCM 9153 / C-125) (Bacillus halodurans).